A 261-amino-acid polypeptide reads, in one-letter code: 5'-nucleotidase SurE (261 aa).

4 residues coordinate a divalent metal cation: Asp-10, Asp-11, Ser-41, and Asn-96.

This sequence belongs to the SurE nucleotidase family. It depends on a divalent metal cation as a cofactor.

It localises to the cytoplasm. It carries out the reaction a ribonucleoside 5'-phosphate + H2O = a ribonucleoside + phosphate. Its function is as follows. Nucleotidase that shows phosphatase activity on nucleoside 5'-monophosphates. This is 5'-nucleotidase SurE from Methanococcoides burtonii (strain DSM 6242 / NBRC 107633 / OCM 468 / ACE-M).